A 553-amino-acid chain; its full sequence is Cytochrome P450 monooxygenase alnD (553 aa).

Residues 351-371 (LVGAGFVTSSAFLSWLIYSLV) traverse the membrane as a helical segment. Cysteine 493 provides a ligand contact to heme. N-linked (GlcNAc...) asparagine glycosylation is present at asparagine 518.

The protein belongs to the cytochrome P450 family. Heme serves as cofactor.

The protein localises to the membrane. It participates in polyketide biosynthesis. Its function is as follows. Cytochrome P450 monooxygenase; part of the gene cluster that mediates the biosynthesis of asperlin, a polyketide showing anti-inflammatory, antitumor and antibiotic activities. The first step of the asperlin biosynthesis is the production of the intermediate 2,4,6-octatrienoic acid by the highly redusing polyketide synthase alnA with cleavage of the PKS product by the esterase alnB. 2,4,6-octatrienoic acid is further converted to asperlin via several steps involving the remaining enzymes from the cluster. This chain is Cytochrome P450 monooxygenase alnD, found in Emericella nidulans (strain FGSC A4 / ATCC 38163 / CBS 112.46 / NRRL 194 / M139) (Aspergillus nidulans).